We begin with the raw amino-acid sequence, 69 residues long: Antimicrobial peptide Meucin-18 (69 aa).

A signal peptide spans 1-16 (MVIFLAYFLVVNESEA). A propeptide spanning residues 38-69 (ERSVMNRDLENLFDPYQRNLEMDRLLKQLRNY) is cleaved from the precursor.

Belongs to the non-disulfide-bridged peptide (NDBP) superfamily. Medium-length antimicrobial peptide (group 3) family. In terms of tissue distribution, expressed by the venom gland.

The protein resides in the secreted. Its subcellular location is the target cell membrane. Amphipathic peptide that exhibits extensive cytolytic activities against both prokaryotic and eukaryotic cells. Acts by fastly disrupting the bacterial membrane. Is more potent against Gram-positive bacteria than against Gram-negative bacteria, and fungi (LC=25.1-8.3 uM). Shows potent activity against penicillin (MIC=3.0 uM) and methicillin (MIC=1.5-3.0 uM) resistant bacteria. Is lethal to the fungus Beauveria sp (LC=1.9 uM), a highly lethal pathogenic fungus to insects and resistant to many AMPs. Shows hemolytic activity against rabbit erythrocytes (37.7% of inhibition at 6.25 uM) and cytolysis against rat dorsal root ganglions. May act by disrupting the integrity of the bacterial cell membrane. Antibiotic activity is not affected by major negatively charged components of the prokaryotic cell wall (e.g. lipopolysaccharides and lipoteichoic acid). In vivo, intravenous injection into mice tail provokes uncomfortable symptoms with a death rate of 12.5%. In vivo, in a mouse model of lethal peritonitis, shows potent antibiotic activity without cytotoxicity, improving the survival rate. The chain is Antimicrobial peptide Meucin-18 from Mesobuthus eupeus (Lesser Asian scorpion).